Consider the following 420-residue polypeptide: Serine hydroxymethyltransferase (420 aa).

(6S)-5,6,7,8-tetrahydrofolate is bound by residues leucine 121 and 125 to 127; that span reads GHL. N6-(pyridoxal phosphate)lysine is present on lysine 229.

Belongs to the SHMT family. In terms of assembly, homodimer. Requires pyridoxal 5'-phosphate as cofactor.

It is found in the cytoplasm. The catalysed reaction is (6R)-5,10-methylene-5,6,7,8-tetrahydrofolate + glycine + H2O = (6S)-5,6,7,8-tetrahydrofolate + L-serine. The protein operates within one-carbon metabolism; tetrahydrofolate interconversion. It functions in the pathway amino-acid biosynthesis; glycine biosynthesis; glycine from L-serine: step 1/1. Functionally, catalyzes the reversible interconversion of serine and glycine with tetrahydrofolate (THF) serving as the one-carbon carrier. This reaction serves as the major source of one-carbon groups required for the biosynthesis of purines, thymidylate, methionine, and other important biomolecules. Also exhibits THF-independent aldolase activity toward beta-hydroxyamino acids, producing glycine and aldehydes, via a retro-aldol mechanism. The chain is Serine hydroxymethyltransferase from Glaesserella parasuis serovar 5 (strain SH0165) (Haemophilus parasuis).